We begin with the raw amino-acid sequence, 435 residues long: NADH-ubiquinone oxidoreductase chain 4 (435 aa).

13 helical membrane-spanning segments follow: residues 27–47, 53–73, 80–100, 102–122, 132–152, 177–197, 206–226, 239–259, 267–285, 295–317, 324–344, 372–394, and 414–434; these read VLTI…ELNG, FVMG…YLSS, ASFN…FSVS, FFLF…LIVG, AGGY…WGVS, LWWL…FHLW, PVAG…YGLL, VFFV…GLAC, CLVA…LGVL, AIII…NAIY, LLVM…MCFL, SXAF…LYLY, and LCDV…FMFM.

The protein belongs to the complex I subunit 4 family.

It localises to the mitochondrion membrane. It catalyses the reaction a ubiquinone + NADH + 5 H(+)(in) = a ubiquinol + NAD(+) + 4 H(+)(out). Functionally, core subunit of the mitochondrial membrane respiratory chain NADH dehydrogenase (Complex I) that is believed to belong to the minimal assembly required for catalysis. Complex I functions in the transfer of electrons from NADH to the respiratory chain. The immediate electron acceptor for the enzyme is believed to be ubiquinone. The sequence is that of NADH-ubiquinone oxidoreductase chain 4 (ND4) from Mytilus edulis (Blue mussel).